The primary structure comprises 163 residues: Nucleotide-binding protein Bcer98_0876 (163 aa).

This sequence belongs to the YajQ family.

Its function is as follows. Nucleotide-binding protein. The polypeptide is Nucleotide-binding protein Bcer98_0876 (Bacillus cytotoxicus (strain DSM 22905 / CIP 110041 / 391-98 / NVH 391-98)).